Reading from the N-terminus, the 592-residue chain is Hepatocyte nuclear factor 1-alpha-B (592 aa).

The tract at residues 1 to 31 (MASQLSYLQQELLRALLESGVTKEALKKALA) is dimerization. The HNF-p1 domain occupies 1–32 (MASQLSYLQQELLRALLESGVTKEALKKALAD). The disordered stretch occupies residues 54 to 78 (NCVQLPNGLGEPQMSEDESSDDGGD). Residues 67 to 77 (MSEDESSDDGG) show a composition bias toward acidic residues. In terms of domain architecture, POU-specific atypical spans 85-180 (KELERLSPEE…IARQFTHAGH (96 aa)). Interaction with DNA stretches follow at residues 128–130 (QRE), 141–147 (HLSQHLN), 153–156 (KTQK), 201–204 (RFKW), 261–263 (RVY), and 268–271 (NSGK). The Nuclear localization signal motif lies at 195–203 (KKMRRNRFK). A DNA-binding region (homeobox; HNF1-type) is located at residues 197 to 277 (MRRNRFKWGP…NSGKEEAFRH (81 aa)). 2 stretches are compositionally biased toward polar residues: residues 284 to 295 (YNGQQSSAQPLS) and 306 to 328 (RYTQ…TLSP). Disordered regions lie at residues 284–329 (YNGQ…LSPS) and 511–533 (KQVV…HNQD).

This sequence belongs to the HNF1 homeobox family. In terms of assembly, binds DNA as dimer. Forms a homodimer or heterodimer with HNF1-alpha-A. Potentially also form a heterodimer with HNF1-beta. As to expression, liver.

The protein localises to the nucleus. Functionally, transcriptional activator that regulates the tissue specific expression of multiple genes, especially in pancreas and liver. Binds to the hepatocyte specific promoter element HP1. Binds to the inverted palindrome 5'-GTTAATNATTAAC-3'. The sequence is that of Hepatocyte nuclear factor 1-alpha-B (hnf1a-b) from Xenopus laevis (African clawed frog).